A 262-amino-acid chain; its full sequence is MRNLTLQRGRRQILSQLSLDLRAGELTVLLGPNGTGKSTLLKCISGEMAAQGEIRLFGQPQSQWPAPILARRMAILPQSSALSFSFLAREVVALGRLPHASGKIADEVIIQRCLQAVGAEHLADSAYTVLSGGEKQRIHFARVLAQLDEHMVDSPQTEREPTAAAPKLLMLDEPTSALDLSHQHQTLQTAQRRARQGDAVLVILHDLNLAARYADRILLLNHGQIQADGSPEEVLTAERIKQIFAFDAQVFRHPETGRLHIS.

The ABC transporter domain maps to 1-247 (MRNLTLQRGR…ERIKQIFAFD (247 aa)). 31–38 (GPNGTGKS) serves as a coordination point for ATP.

This sequence belongs to the ABC transporter superfamily. Heme (hemin) importer (TC 3.A.1.14.5) family. In terms of assembly, the complex is composed of two ATP-binding proteins (HmuV), two transmembrane proteins (HmuU) and a solute-binding protein (HmuT).

It localises to the cell inner membrane. Functionally, part of the ABC transporter complex HmuTUV involved in hemin import. Responsible for energy coupling to the transport system. The polypeptide is Hemin import ATP-binding protein HmuV (Plesiomonas shigelloides (Aeromonas shigelloides)).